We begin with the raw amino-acid sequence, 140 residues long: Methylglyoxal synthase (140 aa).

The 140-residue stretch at 1–140 (MRSKPRIALI…DQAAADDAAP (140 aa)) folds into the MGS-like domain. Residues H12, K16, 38–41 (TGTT), and 58–59 (SG) each bind substrate. The active-site Proton donor/acceptor is D64. A substrate-binding site is contributed by H91.

This sequence belongs to the methylglyoxal synthase family.

The catalysed reaction is dihydroxyacetone phosphate = methylglyoxal + phosphate. Functionally, catalyzes the formation of methylglyoxal from dihydroxyacetone phosphate. In Cupriavidus metallidurans (strain ATCC 43123 / DSM 2839 / NBRC 102507 / CH34) (Ralstonia metallidurans), this protein is Methylglyoxal synthase.